A 167-amino-acid polypeptide reads, in one-letter code: NAD(P)H-quinone oxidoreductase subunit I, chloroplastic (167 aa).

4Fe-4S ferredoxin-type domains are found at residues 55-84 (GRIH…VDWK) and 95-124 (LNYS…MTEE). [4Fe-4S] cluster is bound by residues Cys-64, Cys-67, Cys-70, Cys-74, Cys-104, Cys-107, Cys-110, and Cys-114.

The protein belongs to the complex I 23 kDa subunit family. In terms of assembly, NDH is composed of at least 16 different subunits, 5 of which are encoded in the nucleus. [4Fe-4S] cluster is required as a cofactor.

It is found in the plastid. The protein localises to the chloroplast thylakoid membrane. The enzyme catalyses a plastoquinone + NADH + (n+1) H(+)(in) = a plastoquinol + NAD(+) + n H(+)(out). The catalysed reaction is a plastoquinone + NADPH + (n+1) H(+)(in) = a plastoquinol + NADP(+) + n H(+)(out). Functionally, NDH shuttles electrons from NAD(P)H:plastoquinone, via FMN and iron-sulfur (Fe-S) centers, to quinones in the photosynthetic chain and possibly in a chloroplast respiratory chain. The immediate electron acceptor for the enzyme in this species is believed to be plastoquinone. Couples the redox reaction to proton translocation, and thus conserves the redox energy in a proton gradient. This is NAD(P)H-quinone oxidoreductase subunit I, chloroplastic from Lobularia maritima (Sweet alyssum).